The primary structure comprises 213 residues: High frequency lysogenization protein HflD homolog (213 aa).

The protein belongs to the HflD family.

The protein localises to the cytoplasm. It localises to the cell inner membrane. The protein is High frequency lysogenization protein HflD homolog of Klebsiella pneumoniae (strain 342).